The sequence spans 467 residues: Mitochondrial distribution and morphology protein 10 (467 aa).

A disordered region spans residues 361–393; sequence GLPDTAPSRNRECDDLPPPRRDNYHHQRSPHAS. Residues 369–385 are compositionally biased toward basic and acidic residues; it reads RNRECDDLPPPRRDNYH.

Belongs to the MDM10 family. Component of the ER-mitochondria encounter structure (ERMES) or MDM complex, composed of MMM1, MDM10, MDM12 and MDM34. Associates with the mitochondrial outer membrane sorting assembly machinery SAM(core) complex.

The protein resides in the mitochondrion outer membrane. Component of the ERMES/MDM complex, which serves as a molecular tether to connect the endoplasmic reticulum and mitochondria. Components of this complex are involved in the control of mitochondrial shape and protein biogenesis and may function in phospholipid exchange. MDM10 is involved in the late assembly steps of the general translocase of the mitochondrial outer membrane (TOM complex). Functions in the TOM40-specific route of the assembly of outer membrane beta-barrel proteins, including the association of TOM40 with the receptor TOM22 and small TOM proteins. Can associate with the SAM(core) complex as well as the MDM12-MMM1 complex, both involved in late steps of the major beta-barrel assembly pathway, that is responsible for biogenesis of all outer membrane beta-barrel proteins. May act as a switch that shuttles between both complexes and channels precursor proteins into the TOM40-specific pathway. Plays a role in mitochondrial morphology and in the inheritance of mitochondria. The polypeptide is Mitochondrial distribution and morphology protein 10 (Ajellomyces capsulatus (strain NAm1 / WU24) (Darling's disease fungus)).